A 228-amino-acid chain; its full sequence is ATP-dependent dethiobiotin synthetase BioD (228 aa).

Position 12–17 (12–17 (EIGKTT)) interacts with ATP. Thr16 contributes to the Mg(2+) binding site. Lys37 is a catalytic residue. Ser41 contributes to the substrate binding site. ATP is bound by residues Asp54, 116 to 119 (EGAG), and 205 to 207 (PRL). Mg(2+) contacts are provided by Asp54 and Glu116.

This sequence belongs to the dethiobiotin synthetase family. As to quaternary structure, homodimer. Requires Mg(2+) as cofactor.

The protein localises to the cytoplasm. The catalysed reaction is (7R,8S)-7,8-diammoniononanoate + CO2 + ATP = (4R,5S)-dethiobiotin + ADP + phosphate + 3 H(+). It participates in cofactor biosynthesis; biotin biosynthesis; biotin from 7,8-diaminononanoate: step 1/2. Functionally, catalyzes a mechanistically unusual reaction, the ATP-dependent insertion of CO2 between the N7 and N8 nitrogen atoms of 7,8-diaminopelargonic acid (DAPA, also called 7,8-diammoniononanoate) to form a ureido ring. The polypeptide is ATP-dependent dethiobiotin synthetase BioD (Pseudomonas aeruginosa (strain ATCC 15692 / DSM 22644 / CIP 104116 / JCM 14847 / LMG 12228 / 1C / PRS 101 / PAO1)).